Reading from the N-terminus, the 141-residue chain is Large ribosomal subunit protein uL11 (141 aa).

Positions 1–23 (MAKQVTGQAKFQVPGGQATPAPP) are disordered.

This sequence belongs to the universal ribosomal protein uL11 family. In terms of assembly, part of the ribosomal stalk of the 50S ribosomal subunit. Interacts with L10 and the large rRNA to form the base of the stalk. L10 forms an elongated spine to which L12 dimers bind in a sequential fashion forming a multimeric L10(L12)X complex. In terms of processing, one or more lysine residues are methylated.

In terms of biological role, forms part of the ribosomal stalk which helps the ribosome interact with GTP-bound translation factors. This Rhodopirellula baltica (strain DSM 10527 / NCIMB 13988 / SH1) protein is Large ribosomal subunit protein uL11.